Consider the following 307-residue polypeptide: Voltage-dependent anion channel-forming protein alr2987 (307 aa).

A run of 4 helical transmembrane segments spans residues 19–39 (VIGA…LVTL), 47–67 (VSQP…LLVF), 209–229 (PLAY…LLPF), and 238–258 (WTGL…AIGL).

It belongs to the anion channel-forming bestrophin (TC 1.A.46) family.

The protein localises to the cell membrane. The protein is Voltage-dependent anion channel-forming protein alr2987 of Nostoc sp. (strain PCC 7120 / SAG 25.82 / UTEX 2576).